Here is an 86-residue protein sequence, read N- to C-terminus: Large ribosomal subunit protein bL27 (86 aa).

Belongs to the bacterial ribosomal protein bL27 family.

The sequence is that of Large ribosomal subunit protein bL27 from Christiangramia forsetii (strain DSM 17595 / CGMCC 1.15422 / KT0803) (Gramella forsetii).